Consider the following 118-residue polypeptide: Cell division protein FtsB (118 aa).

The Cytoplasmic portion of the chain corresponds to 1 to 6 (MRNWRW). The chain crosses the membrane as a helical span at residues 7 to 24 (LLLVLAALLAWLQHRFWF). At 25-118 (GPGNSGEVRM…DLSQPRREKR (94 aa)) the chain is on the periplasmic side. Residues 30–66 (GEVRMLQVQIVQQHQENERLRQRNASLAAEVKNLKDG) adopt a coiled-coil conformation. Positions 98 to 118 (LPNDTSADHGVDLSQPRREKR) are disordered. The span at 103–118 (SADHGVDLSQPRREKR) shows a compositional bias: basic and acidic residues.

This sequence belongs to the FtsB family. As to quaternary structure, part of a complex composed of FtsB, FtsL and FtsQ.

The protein resides in the cell inner membrane. Essential cell division protein. May link together the upstream cell division proteins, which are predominantly cytoplasmic, with the downstream cell division proteins, which are predominantly periplasmic. The polypeptide is Cell division protein FtsB (Xylella fastidiosa (strain M23)).